Reading from the N-terminus, the 296-residue chain is Glycerol-3-phosphate dehydrogenase [NAD(P)+] (296 aa).

Residues tryptophan 12, arginine 31, and lysine 80 each contribute to the NADPH site. Residues lysine 80, glycine 108, and serine 110 each contribute to the sn-glycerol 3-phosphate site. Alanine 112 contributes to the NADPH binding site. Residues lysine 162, aspartate 215, serine 225, arginine 226, and asparagine 227 each contribute to the sn-glycerol 3-phosphate site. The active-site Proton acceptor is lysine 162. An NADPH-binding site is contributed by arginine 226. NADPH contacts are provided by valine 250 and glutamate 252.

Belongs to the NAD-dependent glycerol-3-phosphate dehydrogenase family.

It is found in the cytoplasm. It catalyses the reaction sn-glycerol 3-phosphate + NAD(+) = dihydroxyacetone phosphate + NADH + H(+). The enzyme catalyses sn-glycerol 3-phosphate + NADP(+) = dihydroxyacetone phosphate + NADPH + H(+). Its pathway is membrane lipid metabolism; glycerophospholipid metabolism. Its function is as follows. Catalyzes the reduction of the glycolytic intermediate dihydroxyacetone phosphate (DHAP) to sn-glycerol 3-phosphate (G3P), the key precursor for phospholipid synthesis. The polypeptide is Glycerol-3-phosphate dehydrogenase [NAD(P)+] (Sulfurimonas denitrificans (strain ATCC 33889 / DSM 1251) (Thiomicrospira denitrificans (strain ATCC 33889 / DSM 1251))).